The sequence spans 140 residues: Pro-variola growth factor (140 aa).

Residues 1–18 (MSMKYLMLLFAAMIIRSF) form the signal peptide. At 19–100 (ANSGNAIETT…SEKPNTTTSY (82 aa)) the chain is on the extracellular side. An N-linked (GlcNAc...) asparagine; by host glycan is attached at N34. In terms of domain architecture, EGF-like spans 41 to 81 (AIRLCGPEGNGYCFHGICIHARDIDGMYCRCSHGYTGIRCQ). 3 disulfides stabilise this stretch: C45–C58, C53–C69, and C71–C80. An N-linked (GlcNAc...) asparagine; by host glycan is attached at N95. Residues 101-121 (IPSPGIVLVLLVSIIMCCLLF) form a helical membrane-spanning segment. At 122-140 (VYRFTRRTNKLPLQDMVVP) the chain is on the cytoplasmic side.

It belongs to the orthopoxvirus OPG019 family. In terms of assembly, variola growth factor interacts with host EGFR and promotes EGFR dimerization.

The protein resides in the host membrane. It localises to the secreted. Functionally, stimulates cellular proliferation (hyperplasia)and mobility around infected cells to promote rapid and efficient spread of infection. This effect is beneficial for virus replication in vivo, because poxviruses replicate possibly better in proliferating cells than in quiescent cells. Acts by binding host EGFR, inducing its dimerization, autophosphorylation and leading to activation of several cellular pathways regulating cell proliferation or cell survival. The activation by host EGFR of mitogen activated protein kinases (MAPK) and extracellular-signal regulated kinases (ERK) are essential for the positive effect of vaccinia growth factor on poxvirus virulence in vivo. This Variola virus protein is Pro-variola growth factor (OPG019).